The primary structure comprises 313 residues: Acetyl-coenzyme A carboxylase carboxyl transferase subunit alpha (313 aa).

A CoA carboxyltransferase C-terminal domain is found at 36–286; that stretch reads RLDKEVKTIY…KEYFLDTLRT (251 aa).

This sequence belongs to the AccA family. As to quaternary structure, acetyl-CoA carboxylase is a heterohexamer composed of biotin carboxyl carrier protein (AccB), biotin carboxylase (AccC) and two subunits each of ACCase subunit alpha (AccA) and ACCase subunit beta (AccD).

It localises to the cytoplasm. It carries out the reaction N(6)-carboxybiotinyl-L-lysyl-[protein] + acetyl-CoA = N(6)-biotinyl-L-lysyl-[protein] + malonyl-CoA. Its pathway is lipid metabolism; malonyl-CoA biosynthesis; malonyl-CoA from acetyl-CoA: step 1/1. Component of the acetyl coenzyme A carboxylase (ACC) complex. First, biotin carboxylase catalyzes the carboxylation of biotin on its carrier protein (BCCP) and then the CO(2) group is transferred by the carboxyltransferase to acetyl-CoA to form malonyl-CoA. This chain is Acetyl-coenzyme A carboxylase carboxyl transferase subunit alpha, found in Helicobacter acinonychis (strain Sheeba).